Here is a 569-residue protein sequence, read N- to C-terminus: ATP-dependent RNA helicase HAS1 (569 aa).

2 disordered regions span residues 1-57 (MSKG…DQNF) and 71-110 (FKEE…FEDL). The segment covering 34–45 (EEEISSDEEEAD) has biased composition (acidic residues). Basic and acidic residues predominate over residues 71–85 (FKEEKKQKKNKEPKT). Positions 105-133 (DKFEDLGLSEPTMRAIKDMGFEKMTKVQE) match the Q motif motif. The 177-residue stretch at 136–312 (IPPLLAGRDV…RISLRAGPLY (177 aa)) folds into the Helicase ATP-binding domain. 149-156 (AKTGSGKT) is an ATP binding site. Positions 259 to 262 (DEAD) match the DEAD box motif. The 171-residue stretch at 326-496 (GLEQGYVTCD…NIQSQLTKLI (171 aa)) folds into the Helicase C-terminal domain.

This sequence belongs to the DEAD box helicase family. DDX18/HAS1 subfamily. Associates in the nucleolus with the 60S and pre-60S ribosomal subunits.

The protein localises to the nucleus. The protein resides in the nucleolus. It catalyses the reaction ATP + H2O = ADP + phosphate + H(+). Its function is as follows. ATP-dependent RNA helicase involved in 40S ribosomal subunit biogenesis. Required for the processing and cleavage of 35S pre-rRNA at sites A0, A1, and A2, leading to mature 18S rRNA. The chain is ATP-dependent RNA helicase HAS1 (HAS1) from Meyerozyma guilliermondii (strain ATCC 6260 / CBS 566 / DSM 6381 / JCM 1539 / NBRC 10279 / NRRL Y-324) (Yeast).